The sequence spans 290 residues: UPF0761 membrane protein YihY (290 aa).

6 helical membrane passes run 44-64 (LLSLVPLVAVVFALFAAFPMF), 104-124 (VGACGLIVTALLLMYSIDSAL), 140-160 (FAVYWMILTLGPLLAGASLAI), 183-203 (IFPLLLSWISFWLLYSIVPTI), 210-230 (AIVGAFVAALLFEAGKKGFAL), and 244-264 (VLAVIPILFVWVYWTWCIVLL).

The protein belongs to the UPF0761 family.

The protein localises to the cell inner membrane. This Escherichia fergusonii (strain ATCC 35469 / DSM 13698 / CCUG 18766 / IAM 14443 / JCM 21226 / LMG 7866 / NBRC 102419 / NCTC 12128 / CDC 0568-73) protein is UPF0761 membrane protein YihY.